The primary structure comprises 137 residues: Ribonuclease kappa (137 aa).

The next 2 membrane-spanning stretches (helical) occupy residues 52 to 72 and 104 to 124; these read ACGI…GIFF and VSYN…FSFC.

It belongs to the RNase K family. Interacts with the proton translocation complex V0 of the V-ATPase. Interacts with ATP6AP1. Widely expressed.

The protein resides in the endomembrane system. It localises to the cytoplasmic vesicle. The protein localises to the clathrin-coated vesicle membrane. Functionally, endoribonuclease which preferentially cleaves ApU and ApG phosphodiester bonds. Hydrolyzes UpU bonds at a lower rate. Regulates the activity of vacuolar (H+)-ATPase (V-ATPase) which is responsible for acidifying and maintaining the pH of intracellular compartments. Required at an early stage of receptor-mediated endocytosis. In terms of biological role, (Microbial infection) Required at an early stage of both clathrin-mediated and clathrin-independent endocytic uptake of a diverse set of viruses, including dengue, West Nile, Sindbis, Rift Valley Fever, influenza, and human rhinoviruses. In Homo sapiens (Human), this protein is Ribonuclease kappa (RNASEK).